Reading from the N-terminus, the 458-residue chain is MGDAGGHSHHHQHGFQPQLLSFGGVGHHHHLHQFTAQPQPPAASHTRGRGGGGEIVPATTTPRSRGGGGGGGGEIVAVQGGHIVRSTGRKDRHSKVCTARGPRDRRVRLSAHTAIQFYDVQDRLGYDRPSKAVDWLIKNAKDAIDKLDVLPAWQPTAGGAGAGNAAAPPSSSTHPDSAENSDDQAQAITVAHTAFDFAGGGSGGTSFLPPSLDSDAIADTIKSFFPMGGTAGGEASSSTTAAQSSAMGFQSYTPDLLSRTGSQSQELRLSLQSLPDPMFHHQQHRHGGGGGGGNGTTQQALFSGAANYSFGGGAMWATEQQAQNQRMLPWNVPDPGGGGGAAYLFNVSQQAAHMQAAAAALGGHQSQFFFQRGPLQSSNQPSERGWPETVEADNQMSHHQGGLSPSVSAAIGFAAPGIGFSGFRLPARIQGDEEHNGGGGGNGDKPPPPSSVSSASHH.

4 disordered regions span residues 1-103 (MGDA…RGPR), 159-182 (GAGA…ENSD), 278-299 (MFHH…TTQQ), and 424-458 (RLPA…ASHH). The span at 65–74 (RGGGGGGGGE) shows a compositional bias: gly residues. Residues 89–147 (RKDRHSKVCTARGPRDRRVRLSAHTAIQFYDVQDRLGYDRPSKAVDWLIKNAKDAIDKL) enclose the TCP domain.

Forms homodimers and heterodimers.

The protein resides in the nucleus. In terms of biological role, transcription activator. Binds the promoter core sequence 5'-GGNCC-3'. This chain is Transcription factor PCF5 (PCF5), found in Oryza sativa subsp. japonica (Rice).